The sequence spans 68 residues: Pantinin-3 (68 aa).

The N-terminal stretch at 1-23 (MKTQFAILLIALVLFQLLSQSDA) is a signal peptide. Leucine 36 is modified (leucine amide). Residues 40 to 68 (GLNELDNLDELFDGEISQADIDFLKELMS) constitute a propeptide that is removed on maturation.

The protein belongs to the non-disulfide-bridged peptide (NDBP) superfamily. Short antimicrobial peptide (group 4) family. As to expression, expressed by the venom gland.

It is found in the secreted. The protein resides in the target cell membrane. Functionally, amphipathic peptide that possesses relatively strong activities against Gram-positive bacteria and a fungus, but has very weak antimicrobial activities against Gram-negative bacteria. Also exhibits mild hemolytic activities against human erythrocytes (16 uM induce 70% of hemolysis). Furthermore, this peptide potently inhibits the growth of vancomycin-resistant Enterococcus (VRE) S13, a pathogen that can cause a number of human infections. Minimal inhibitory concentration (MIC) are the following: 16 uM against S.aureus, 6 uM against B.magaterium, 8 uM against M.luteus, 4 uM against VRE, 12 uM against methicillin-resistant S.aureus, 36 uM against E.coli, &gt;87 uM against P.putida, 87 uM against K.oxytoca, &gt;87 uM against E.cloacae, 84 uM against S.enterica and 17 uM against the fungus C.tropicalis. This is Pantinin-3 from Pandinus imperator (Emperor scorpion).